The sequence spans 137 residues: Large ribosomal subunit protein uL13 (137 aa).

This sequence belongs to the universal ribosomal protein uL13 family. In terms of assembly, part of the 50S ribosomal subunit.

Its function is as follows. This protein is one of the early assembly proteins of the 50S ribosomal subunit, although it is not seen to bind rRNA by itself. It is important during the early stages of 50S assembly. The polypeptide is Large ribosomal subunit protein uL13 (Methanococcus maripaludis (strain DSM 14266 / JCM 13030 / NBRC 101832 / S2 / LL)).